Reading from the N-terminus, the 290-residue chain is GTPase Era (290 aa).

Positions lysine 2–glutamate 169 constitute an Era-type G domain. The G1 stretch occupies residues glycine 10–serine 17. Position 10–17 (glycine 10–serine 17) interacts with GTP. Residues glutamine 36–asparagine 40 are G2. Residues aspartate 57 to glycine 60 form a G3 region. GTP is bound by residues aspartate 57–phenylalanine 61 and asparagine 119–aspartate 122. A G4 region spans residues asparagine 119–aspartate 122. The segment at isoleucine 148–alanine 150 is G5. Residues leucine 200–lysine 276 enclose the KH type-2 domain.

This sequence belongs to the TRAFAC class TrmE-Era-EngA-EngB-Septin-like GTPase superfamily. Era GTPase family. As to quaternary structure, monomer.

The protein resides in the cytoplasm. The protein localises to the cell inner membrane. An essential GTPase that binds both GDP and GTP, with rapid nucleotide exchange. Plays a role in 16S rRNA processing and 30S ribosomal subunit biogenesis and possibly also in cell cycle regulation and energy metabolism. This is GTPase Era from Borrelia garinii subsp. bavariensis (strain ATCC BAA-2496 / DSM 23469 / PBi) (Borreliella bavariensis).